We begin with the raw amino-acid sequence, 93 residues long: Putative pterin-4-alpha-carbinolamine dehydratase (93 aa).

The protein belongs to the pterin-4-alpha-carbinolamine dehydratase family.

The catalysed reaction is (4aS,6R)-4a-hydroxy-L-erythro-5,6,7,8-tetrahydrobiopterin = (6R)-L-erythro-6,7-dihydrobiopterin + H2O. The sequence is that of Putative pterin-4-alpha-carbinolamine dehydratase from Trichodesmium erythraeum (strain IMS101).